The primary structure comprises 541 residues: Periplasmic oligopeptide-binding protein OppA (541 aa).

An N-terminal signal peptide occupies residues 1-20; sequence MQHKLLFSAIALALSYSAQA.

It belongs to the bacterial solute-binding protein 5 family. In terms of assembly, the complex is composed of two ATP-binding proteins (OppD and OppF), two transmembrane proteins (OppB and OppC) and a solute-binding protein (OppA).

It localises to the periplasm. Functionally, part of the ABC transporter complex OppABCDF involved in the uptake of oligopeptides. Plays an important nutritional role. Binds peptides containing from two to five amino acid residues. The sequence is that of Periplasmic oligopeptide-binding protein OppA (oppA) from Haemophilus influenzae (strain ATCC 51907 / DSM 11121 / KW20 / Rd).